Consider the following 38-residue polypeptide: Large ribosomal subunit protein bL36 (38 aa).

This sequence belongs to the bacterial ribosomal protein bL36 family.

The sequence is that of Large ribosomal subunit protein bL36 from Roseiflexus sp. (strain RS-1).